A 35-amino-acid polypeptide reads, in one-letter code: Conotoxin Cl6.16 (35 aa).

3 disulfide bridges follow: Cys-10/Cys-22, Cys-16/Cys-27, and Cys-21/Cys-34.

Expressed by the venom duct.

The protein localises to the secreted. The sequence is that of Conotoxin Cl6.16 from Californiconus californicus (California cone).